A 160-amino-acid polypeptide reads, in one-letter code: Cyclic pyranopterin monophosphate synthase (160 aa).

Residues 75-77 and 113-114 contribute to the substrate site; these read LCH and ME. Residue D128 is part of the active site.

This sequence belongs to the MoaC family. As to quaternary structure, homohexamer; trimer of dimers.

The enzyme catalyses (8S)-3',8-cyclo-7,8-dihydroguanosine 5'-triphosphate = cyclic pyranopterin phosphate + diphosphate. Its pathway is cofactor biosynthesis; molybdopterin biosynthesis. Catalyzes the conversion of (8S)-3',8-cyclo-7,8-dihydroguanosine 5'-triphosphate to cyclic pyranopterin monophosphate (cPMP). The sequence is that of Cyclic pyranopterin monophosphate synthase from Methylobacterium nodulans (strain LMG 21967 / CNCM I-2342 / ORS 2060).